The chain runs to 316 residues: MIKLGIVMDPIANINIKKDSSFAMLLEAQRRGYELHYMEMADLYLINGEARARTRTLSVEQNYDKWYEFTGEQDLPLADLDVILMRKDPPFDTEFIYSTYILERAEDKGTLIVNKPQSLRDCNEKLFTAWFSDLTPETLVTRNKAQLKAFWEKHSDIILKPLDGMGGASIFRVKEGDPNLGVIAETLTEHGTRYCMAQNYLPAIKDGDKRVLVVDGEPVPYCLARIPQGGETRGNLAAGGRGEPRPLTESDWKIARQIGPTLKEKGLIFVGLDIIGDRLTEINVTSPTCIREIEAEFPVSITGMLMDAIEARLQQQ.

The 186-residue stretch at 125 to 310 (KLFTAWFSDL…ITGMLMDAIE (186 aa)) folds into the ATP-grasp domain. 151-207 (WEKHSDIILKPLDGMGGASIFRVKEGDPNLGVIAETLTEHGTRYCMAQNYLPAIKDG) is an ATP binding site. Residues E281 and N283 each contribute to the Mg(2+) site.

This sequence belongs to the prokaryotic GSH synthase family. Mg(2+) serves as cofactor. It depends on Mn(2+) as a cofactor.

The catalysed reaction is gamma-L-glutamyl-L-cysteine + glycine + ATP = glutathione + ADP + phosphate + H(+). Its pathway is sulfur metabolism; glutathione biosynthesis; glutathione from L-cysteine and L-glutamate: step 2/2. This Escherichia coli O6:H1 (strain CFT073 / ATCC 700928 / UPEC) protein is Glutathione synthetase.